Consider the following 390-residue polypeptide: Chorismate synthase (390 aa).

Arg-39 and Arg-45 together coordinate NADP(+). FMN contacts are provided by residues 132–134, 253–254, Gly-298, 313–317, and Arg-339; these read RSS, NA, and KPIPT.

This sequence belongs to the chorismate synthase family. As to quaternary structure, homotetramer. Requires FMNH2 as cofactor.

The enzyme catalyses 5-O-(1-carboxyvinyl)-3-phosphoshikimate = chorismate + phosphate. The protein operates within metabolic intermediate biosynthesis; chorismate biosynthesis; chorismate from D-erythrose 4-phosphate and phosphoenolpyruvate: step 7/7. Functionally, catalyzes the anti-1,4-elimination of the C-3 phosphate and the C-6 proR hydrogen from 5-enolpyruvylshikimate-3-phosphate (EPSP) to yield chorismate, which is the branch point compound that serves as the starting substrate for the three terminal pathways of aromatic amino acid biosynthesis. This reaction introduces a second double bond into the aromatic ring system. The chain is Chorismate synthase from Bacillus cytotoxicus (strain DSM 22905 / CIP 110041 / 391-98 / NVH 391-98).